The sequence spans 364 residues: Anionic peroxidase (364 aa).

The signal sequence occupies residues Met-1–Ala-20. Residues Gly-21–Gly-66 constitute a propeptide that is removed on maturation. The Proton acceptor role is filled by His-99. The Ca(2+) site is built by Asp-100, Val-103, Gly-105, and Asp-107. A disulfide bridge links Cys-101 with Cys-106. N-linked (GlcNAc...) asparagine glycans are attached at residues Asn-113, Asn-188, Asn-202, and Asn-216. 2 cysteine pairs are disulfide-bonded: Cys-155–Cys-343 and Cys-234–Cys-255. Residue His-227 coordinates heme b. Residue Thr-228 participates in Ca(2+) binding. Residues Asn-254 and Asn-260 are each glycosylated (N-linked (GlcNAc...) asparagine). Asp-268, Thr-270, and Asp-275 together coordinate Ca(2+). N-linked (GlcNAc...) asparagine glycosylation occurs at Asn-299.

Belongs to the peroxidase family. Classical plant (class III) peroxidase subfamily. It depends on Ca(2+) as a cofactor. Heme b serves as cofactor. Highly expressed in suspension cultured cells and calli. Weak expression also found in the stems of intact plants. No expression in leaf, tuberous root and non-tuberous root.

The protein localises to the secreted. The enzyme catalyses 2 a phenolic donor + H2O2 = 2 a phenolic radical donor + 2 H2O. In terms of biological role, removal of H(2)O(2), oxidation of toxic reductants, biosynthesis and degradation of lignin, suberization, auxin catabolism, response to environmental stresses such as wounding, pathogen attack and oxidative stress. These functions might be dependent on each isozyme/isoform in each plant tissue. Its function is as follows. May contribute to protection against cold-induced oxidative stress. In Ipomoea batatas (Sweet potato), this protein is Anionic peroxidase.